The following is a 182-amino-acid chain: Large ribosomal subunit protein bL25 (182 aa).

Belongs to the bacterial ribosomal protein bL25 family. CTC subfamily. As to quaternary structure, part of the 50S ribosomal subunit; part of the 5S rRNA/L5/L18/L25 subcomplex. Contacts the 5S rRNA. Binds to the 5S rRNA independently of L5 and L18.

Its function is as follows. This is one of the proteins that binds to the 5S RNA in the ribosome where it forms part of the central protuberance. This is Large ribosomal subunit protein bL25 from Borreliella burgdorferi (strain ZS7) (Borrelia burgdorferi).